The following is a 414-amino-acid chain: MNVLVLNAGSSSLKFQIIATDLERIQRDSDERLCHGYVERIGGEAIITVEPRGGPRKKVTAPVRNIAAALDYVLRWLASDQSGVAEIRSLSDVHAVGHRVVHGGEVFRESAVITDEVLQGIEDCIDLAPLHNPNNIKGILAARDAFGSGMPQVAVFDTAFHTSLPDHAYLYAMPYHLYARHRIRRYGFHGTSNRYVAYRYRTLRQLTREQTNIITLHLGNGCSATAIRNGRSMDTSMGMTPLEGLVMGTRSGDLDPAILSLIATKEGLSPTEVEALLNTQCGLLGISGVTNDMKVLLQELREHDDRRIRLAIEIFCYRARKYIGALLACMGGADAVIFTGGIGENAPEIRARICAGLEWAGLEIDSDQNAQTMGRPQQISKPESRLQAWVIPTDEELLIARDTVRCILGEPHPA.

Mg(2+) is bound at residue N7. K14 contacts ATP. Residue R99 participates in substrate binding. The active-site Proton donor/acceptor is D157. ATP is bound by residues 217 to 221 (HLGNG) and 341 to 345 (GIGEN). E395 serves as a coordination point for Mg(2+).

It belongs to the acetokinase family. Homodimer. Mg(2+) serves as cofactor. Mn(2+) is required as a cofactor.

Its subcellular location is the cytoplasm. The catalysed reaction is acetate + ATP = acetyl phosphate + ADP. It functions in the pathway metabolic intermediate biosynthesis; acetyl-CoA biosynthesis; acetyl-CoA from acetate: step 1/2. Catalyzes the formation of acetyl phosphate from acetate and ATP. Can also catalyze the reverse reaction. The protein is Acetate kinase of Solibacter usitatus (strain Ellin6076).